Here is a 222-residue protein sequence, read N- to C-terminus: Cytidylate kinase (222 aa).

9 to 17 (GPSGAGKST) contributes to the ATP binding site.

This sequence belongs to the cytidylate kinase family. Type 1 subfamily.

It localises to the cytoplasm. It carries out the reaction CMP + ATP = CDP + ADP. It catalyses the reaction dCMP + ATP = dCDP + ADP. The chain is Cytidylate kinase from Thermodesulfovibrio yellowstonii (strain ATCC 51303 / DSM 11347 / YP87).